A 519-amino-acid polypeptide reads, in one-letter code: Sorting nexin-2 (519 aa).

Residues M1 to T104 are disordered. Composition is skewed to low complexity over residues L27–E50 and S93–T104. S97 carries the phosphoserine modification. 2 positions are modified to phosphothreonine: T101 and T104. Phosphoserine is present on residues S117 and S119. A PX domain is found at F140 to R269. Residues R183, S185, K211, and R235 each contribute to the a 1,2-diacyl-sn-glycero-3-phospho-(1D-myo-inositol-3-phosphate) site. S185 carries the phosphoserine modification. Residues Q260 to A519 form an interaction with RhoG region. S277 is modified (phosphoserine). Positions G278–M295 are membrane-binding amphipathic helix. A BAR domain is found at M299–A519. Position 469 is an N6-acetyllysine (K469).

Belongs to the sorting nexin family. Predominantly forms heterodimers with BAR domain-containing sorting nexins SNX5, SNX6 and SNX32; can self-associate to form homodimers. The heterodimers are proposed to self-assemble into helical arrays on the membrane to stabilize and expand local membrane curvature underlying endosomal tubule formation. Thought to be a component of the originally described retromer complex (also called SNX-BAR retromer) which is a pentamer containing the heterotrimeric retromer cargo-selective complex (CSC), also described as vacuolar protein sorting subcomplex (VPS), and a heterodimeric membrane-deforming subcomplex formed between SNX1 or SNX2 and SNX5 or SNX6 (also called SNX-BAR subcomplex); the respective CSC and SNX-BAR subcomplexes associate with low affinity. Interacts with SNX5, SNX6, SNX32, VPS26A, VPS29, VPS35, FNBP1, KALRN, RHOG (GDP-bound form).

Its subcellular location is the early endosome membrane. The protein localises to the cell projection. It localises to the lamellipodium. Its function is as follows. Involved in several stages of intracellular trafficking. Interacts with membranes containing phosphatidylinositol 3-phosphate (PtdIns(3P)) or phosphatidylinositol 3,5-bisphosphate (PtdIns(3,5)P2). Acts in part as component of the retromer membrane-deforming SNX-BAR subcomplex. The SNX-BAR retromer mediates retrograde transport of cargo proteins from endosomes to the trans-Golgi network (TGN) and is involved in endosome-to-plasma membrane transport for cargo protein recycling. The SNX-BAR subcomplex functions to deform the donor membrane into a tubular profile called endosome-to-TGN transport carrier (ETC). Can sense membrane curvature and has in vitro vesicle-to-membrane remodeling activity. Required for retrograde endosome-to-TGN transport of TGN38. Promotes KALRN- and RHOG-dependent but retromer-independent membrane remodeling such as lamellipodium formation; the function is dependent on GEF activity of KALRN. The polypeptide is Sorting nexin-2 (SNX2) (Homo sapiens (Human)).